The sequence spans 429 residues: MKVSIFKTLYFQVLTAITIGVLLGHFYPEIGAQMKPLGDGFVKLIKMIIAPVIFCTVVTGIAGMESMKAVGRTGAIALLYFEIVSTLALLIGLVVVNVAQPGVGMNIDPATLDAKAVALYAEQASQQGIIPFLLDIIPGSVVGAFASGNILQVLLFAVLFGFALHRLGEKGQLIFNVIESFSRVIFGVINMIMRLAPLGAFGAMAFTIGKYGVGSLVQLGQLILCFYLTCILFVVLVLGTIAKFNGFNIFKFIRYIKEELLIVLGTSSSESVLPRMLDKMENAGCKKSVVGLVIPTGYSFNLDGTSIYLTMAAVFIAQATNTHMDIMHQVTLLVVLLLSSKGAAGVTGSGFIVLAATISAVGHLPLAGLALILGIDRFMSEARALTNLVGNGVATIVVAKWCKQLDNDQLQAVLSNKVLPNVKNSVSVS.

A run of 8 helical transmembrane segments spans residues 3–23 (VSIF…GVLL), 44–64 (LIKM…IAGM), 76–96 (IALL…LVVV), 144–164 (AFAS…GFAL), 184–204 (VIFG…FGAM), 222–242 (LILC…GTIA), 331–351 (TLLV…GSGF), and 352–372 (IVLA…LALI).

This sequence belongs to the dicarboxylate/amino acid:cation symporter (DAACS) (TC 2.A.23) family.

The protein resides in the cell inner membrane. Responsible for the transport of dicarboxylates such as succinate, fumarate, and malate from the periplasm across the membrane. The sequence is that of C4-dicarboxylate transport protein from Yersinia pseudotuberculosis serotype O:1b (strain IP 31758).